A 160-amino-acid chain; its full sequence is NAD(P)H-quinone oxidoreductase subunit I, chloroplastic (160 aa).

4Fe-4S ferredoxin-type domains are found at residues 55–84 (GRIH…VDWK) and 95–124 (LNYS…MTEE). C64, C67, C70, C74, C104, C107, C110, and C114 together coordinate [4Fe-4S] cluster.

The protein belongs to the complex I 23 kDa subunit family. In terms of assembly, NDH is composed of at least 16 different subunits, 5 of which are encoded in the nucleus. It depends on [4Fe-4S] cluster as a cofactor.

It localises to the plastid. The protein localises to the chloroplast thylakoid membrane. It carries out the reaction a plastoquinone + NADH + (n+1) H(+)(in) = a plastoquinol + NAD(+) + n H(+)(out). The catalysed reaction is a plastoquinone + NADPH + (n+1) H(+)(in) = a plastoquinol + NADP(+) + n H(+)(out). In terms of biological role, NDH shuttles electrons from NAD(P)H:plastoquinone, via FMN and iron-sulfur (Fe-S) centers, to quinones in the photosynthetic chain and possibly in a chloroplast respiratory chain. The immediate electron acceptor for the enzyme in this species is believed to be plastoquinone. Couples the redox reaction to proton translocation, and thus conserves the redox energy in a proton gradient. In Cucumis sativus (Cucumber), this protein is NAD(P)H-quinone oxidoreductase subunit I, chloroplastic.